The primary structure comprises 89 residues: Putative regulatory protein Nther_1328 (89 aa).

It belongs to the RemA family.

This Natranaerobius thermophilus (strain ATCC BAA-1301 / DSM 18059 / JW/NM-WN-LF) protein is Putative regulatory protein Nther_1328.